Consider the following 283-residue polypeptide: Shikimate kinase (283 aa).

86–96 (PLKSGLSSSSA) contacts ATP.

Belongs to the GHMP kinase family. Archaeal shikimate kinase subfamily.

It localises to the cytoplasm. It carries out the reaction shikimate + ATP = 3-phosphoshikimate + ADP + H(+). The protein operates within metabolic intermediate biosynthesis; chorismate biosynthesis; chorismate from D-erythrose 4-phosphate and phosphoenolpyruvate: step 5/7. This Methanococcus vannielii (strain ATCC 35089 / DSM 1224 / JCM 13029 / OCM 148 / SB) protein is Shikimate kinase.